Consider the following 437-residue polypeptide: GTPase HflX (437 aa).

The segment at 150–173 (DRQGGGSGGGKGGGGAARGEGEKQ) is disordered. Gly residues predominate over residues 152-167 (QGGGSGGGKGGGGAAR). Positions 212 to 382 (ATAAIVGYTN…ACVEMLESRV (171 aa)) constitute a Hflx-type G domain. GTP-binding positions include 218–225 (GYTNAGKS), 243–247 (FATLD), 265–268 (DTVG), 331–334 (NKVD), and 360–362 (SVK). Ser225 and Thr245 together coordinate Mg(2+).

It belongs to the TRAFAC class OBG-HflX-like GTPase superfamily. HflX GTPase family. In terms of assembly, monomer. Associates with the 50S ribosomal subunit. Mg(2+) serves as cofactor.

The protein resides in the cytoplasm. In terms of biological role, GTPase that associates with the 50S ribosomal subunit and may have a role during protein synthesis or ribosome biogenesis. The sequence is that of GTPase HflX from Akkermansia muciniphila (strain ATCC BAA-835 / DSM 22959 / JCM 33894 / BCRC 81048 / CCUG 64013 / CIP 107961 / Muc).